Reading from the N-terminus, the 391-residue chain is Paired box protein Pax-5 (391 aa).

The segment at residues 16-142 (GHGGVNQLGG…SSINRIIRTK (127 aa)) is a DNA-binding region (paired). The tract at residues 19-75 (GVNQLGGVFVNGRPLPDVVRQRIVELAHQGVRPCDISRQLRVSHGCVSKILGRYYET) is PAI subdomain. Residues 94–142 (KVVEKIAEYKRQNPTMFAWEIRDRLLAERVCDNDTVPSVSSINRIIRTK) are RED subdomain. A disordered region spans residues 182 to 218 (SGILGITSPSADTNKRKRDEGIQESPVPNGHSLPGRD).

In terms of assembly, interacts with ETS1; this interaction alters PAX5 DNA-binding properties. Binds DNA as a monomer. Interacts with TBP; this interaction allows PAX5 to interact with the basal transcription machinery. Interacts with RB1. Interacts with TLE4. Interacts with DAXX. O-glycosylated. In terms of processing, phosphorylated by SYK. This phosphorylation plays an important role in the abolition of BLIMP1 repression by PAX5 in order to trigger plasma cell differentiation. In terms of tissue distribution, expressed in all B-lymphoid organs, in the embryonic midbrain and in adult testis.

The protein resides in the nucleus. In terms of biological role, transcription factor that plays an essential role in commitment of lymphoid progenitors to the B-lymphocyte lineage. Fulfills a dual role by repressing B-lineage inappropriate genes and simultaneously activating B-lineage-specific genes. In turn, regulates cell adhesion and migration, induces V(H)-to-D(H)J(H) recombination, facilitates pre-B-cell receptor signaling and promotes development to the mature B-cell stage. Repression of the cohesin-release factor WAPL causes global changes of the chromosomal architecture in pro-B cells to facilitate the generation of a diverse antibody repertoire. The sequence is that of Paired box protein Pax-5 (Pax5) from Mus musculus (Mouse).